A 352-amino-acid chain; its full sequence is Protein CIA1 (352 aa).

WD repeat units lie at residues 18-64 (GHTD…RSWT), 72-111 (THTR…FECI), 116-155 (GHEN…EYDC), 161-200 (GHTQ…GEYQ), 211-250 (GHSS…MQSG), 265-303 (YHDR…SVDG), and 315-352 (AHEN…ATKP).

Belongs to the WD repeat CIA1 family. As to quaternary structure, part of a complex composed of AE7, CIA1, MMS19 and NAR1. Interacts with AE7 and NAR1.

Its subcellular location is the nucleus. It localises to the cytoplasm. Essential component of the cytosolic iron-sulfur (Fe-S) protein assembly (CIA) machinery. Required for the maturation of extramitochondrial Fe/S proteins. This chain is Protein CIA1, found in Arabidopsis thaliana (Mouse-ear cress).